Consider the following 238-residue polypeptide: MGRSFEVRKASMAKTAGAKIKVYSKYGKEIYVLAKNGSSDPDMNLPLKHLIAKAKKDQVPAHVIDKAIDKANGGGGEDFQPARYEGFGPGGTSVIVDCLTDNGNRTFQDVRQCFVKTGAKIGVEGTVSHMFAHQAVFQFAGEDDEIILETLMMEDVDVTDVELEDGVITVFAPTTEFFKTKTALNAAFPDLTLDVEEITFVPQTTTPIAEEDSEKFQKFLDMLDDCDDVQQVYHNAEL.

The protein belongs to the TACO1 family.

It is found in the cytoplasm. This chain is Probable transcriptional regulatory protein VS_II1504, found in Vibrio atlanticus (strain LGP32) (Vibrio splendidus (strain Mel32)).